The following is a 180-amino-acid chain: NADH-quinone oxidoreductase subunit I (180 aa).

4Fe-4S ferredoxin-type domains are found at residues 50–80 (LTRDPDGEERCVACNLCAVACPVGCISLQKA) and 90–119 (EFFRINFSRCIFCGMCEEACPTTAIQMTPD). The [4Fe-4S] cluster site is built by Cys60, Cys63, Cys66, Cys70, Cys99, Cys102, Cys105, and Cys109.

Belongs to the complex I 23 kDa subunit family. NDH-1 is composed of 14 different subunits. Subunits NuoA, H, J, K, L, M, N constitute the membrane sector of the complex. It depends on [4Fe-4S] cluster as a cofactor.

The protein resides in the cell inner membrane. The catalysed reaction is a quinone + NADH + 5 H(+)(in) = a quinol + NAD(+) + 4 H(+)(out). NDH-1 shuttles electrons from NADH, via FMN and iron-sulfur (Fe-S) centers, to quinones in the respiratory chain. The immediate electron acceptor for the enzyme in this species is believed to be ubiquinone. Couples the redox reaction to proton translocation (for every two electrons transferred, four hydrogen ions are translocated across the cytoplasmic membrane), and thus conserves the redox energy in a proton gradient. The polypeptide is NADH-quinone oxidoreductase subunit I (Acinetobacter baylyi (strain ATCC 33305 / BD413 / ADP1)).